The sequence spans 248 residues: Type II secretion system protein N (248 aa).

Residues 1 to 6 (MKLKSG) lie on the Cytoplasmic side of the membrane. Residues 7–27 (IVTGVALVLAYGLFLASYAPA) form a helical; Signal-anchor for type II membrane protein membrane-spanning segment. Over 28-248 (RLLTAVPLPA…RTLNFQGRLL (221 aa)) the chain is Periplasmic.

This sequence belongs to the GSP N family.

It is found in the cell inner membrane. Its function is as follows. Involved in a type II secretion system (T2SS, formerly general secretion pathway, GSP) for the export of proteins. Required for the translocation of the multiple pectic enzymes. The polypeptide is Type II secretion system protein N (outN) (Pectobacterium carotovorum subsp. carotovorum (Erwinia carotovora subsp. carotovora)).